The primary structure comprises 85 residues: Large ribosomal subunit protein bL27 (85 aa).

The interval M1 to G22 is disordered.

It belongs to the bacterial ribosomal protein bL27 family.

This chain is Large ribosomal subunit protein bL27, found in Sorangium cellulosum (strain So ce56) (Polyangium cellulosum (strain So ce56)).